The following is a 393-amino-acid chain: DNA primase small subunit PriS (393 aa).

Active-site residues include Asp100, Asp102, and Asp296.

It belongs to the eukaryotic-type primase small subunit family. Heterodimer of a small subunit (PriS) and a large subunit (PriL). Mg(2+) serves as cofactor. The cofactor is Mn(2+).

Functionally, catalytic subunit of DNA primase, an RNA polymerase that catalyzes the synthesis of short RNA molecules used as primers for DNA polymerase during DNA replication. The small subunit contains the primase catalytic core and has DNA synthesis activity on its own. Binding to the large subunit stabilizes and modulates the activity, increasing the rate of DNA synthesis while decreasing the length of the DNA fragments, and conferring RNA synthesis capability. The DNA polymerase activity may enable DNA primase to also catalyze primer extension after primer synthesis. May also play a role in DNA repair. The chain is DNA primase small subunit PriS from Natronomonas pharaonis (strain ATCC 35678 / DSM 2160 / CIP 103997 / JCM 8858 / NBRC 14720 / NCIMB 2260 / Gabara) (Halobacterium pharaonis).